Here is a 1117-residue protein sequence, read N- to C-terminus: Guanylate cyclase D (1117 aa).

An N-terminal signal peptide occupies residues 1-66 (MAGLQQGCHF…ADSLSLLAWA (66 aa)). The Extracellular segment spans residues 67–479 (RETFTLGVLG…CIRGVQPLGS (413 aa)). The cysteines at positions 121 and 149 are disulfide-linked. The helical transmembrane segment at 480–500 (LLTLTIACVLALVGGFLAYFI) threads the bilayer. Over 501–1117 (RLGLQQLRLL…RKSGEAGPGP (617 aa)) the chain is Cytoplasmic. A disordered region spans residues 529–557 (TPSRRRPHVDSGSESRSVVDGGSPRSVTQ). Positions 541–812 (SESRSVVDGG…PSLDQIYTQF (272 aa)) constitute a Protein kinase domain. The interval 874 to 915 (MGTTVEPEYFDQVTIYFSDIVGFTTISALSEPIEVVGFLNDL) is interaction with NCALD. A Guanylate cyclase domain is found at 887 to 1017 (TIYFSDIVGF…DTVNTASRME (131 aa)). Residues 1096–1117 (GFAKARQGLAEPRKSGEAGPGP) form a disordered region.

It belongs to the adenylyl cyclase class-4/guanylyl cyclase family. In terms of assembly, interacts (via the catalytic domain) with NCALD. In terms of tissue distribution, found in a subset of olfactory neurons in the main olfactory epithelium.

It is found in the cell projection. Its subcellular location is the cilium membrane. The enzyme catalyses GTP = 3',5'-cyclic GMP + diphosphate. With respect to regulation, activated by Ca(2+). Functions as an olfactory receptor activated by urine odorants, uroguanylin and guanylin and as well by the volatile semiochemicals carbon disulfide (CS2) and carbon dioxide (CO2). Has guanylate cyclase activity upon binding of the ligand. Activation of GUCY2D neurons leads to the cGMP-dependent activation of the CNGA3 channels, membrane depolarization and an increase in action potential frequency. Signaling pathways activated by GUCY2D may trigger social behaviors such as acquisition of food preference. The sequence is that of Guanylate cyclase D from Mus musculus (Mouse).